The chain runs to 632 residues: Probable membrane transporter protein MamO (632 aa).

Residues 25–45 form a helical membrane-spanning segment; it reads APVSILAFLILVTFAWGAYLL. Residues 78-268 are protease-like; sequence LYYTVPPAVV…VIVSHLQDVV (191 aa). Residues H148 and H263 each contribute to the a divalent metal cation site. 7 helical membrane-spanning segments follow: residues 340 to 360, 412 to 432, 434 to 454, 513 to 533, 550 to 570, 582 to 602, and 612 to 632; these read IGGY…AAGV, LVQW…VVIG, FIGN…FALI, AVLG…GGVI, IANS…VAFI, APVT…ILGA, and VLKG…LTTV. Positions 365–632 are TSUP-like; that stretch reads MTMGGGVLQV…AIAIKMLTTV (268 aa).

This sequence in the N-terminal section; belongs to the peptidase S1C family. In the C-terminal section; belongs to the 4-toluene sulfonate uptake permease (TSUP) (TC 2.A.102) family. A metal cation is required as a cofactor. Subject to proteolytic cleavage by MamE.

The protein localises to the magnetosome membrane. Plays 2 roles; promotes magnetite nucleation/formation and activates the MamE protease. Despite its near conservation of a protease-like sequence, this is probably not a protease. Required in conjunction with MamP for proteolysis of at least MamE, itself and MamP. May transport a solute that controls MamE's protease activity. May place individual iron atoms into the magnetite lattice. One of 7 genes (mamLQBIEMO) able to induce magnetosome membrane biogenesis; coexpression of mamLQRBIEMO in a deletion of the 17 gene mamAB operon restores magnetosome vesicle formation but not magnetite biosynthesis. The sequence is that of Probable membrane transporter protein MamO from Magnetospirillum gryphiswaldense (strain DSM 6361 / JCM 21280 / NBRC 15271 / MSR-1).